The sequence spans 197 residues: dITP/XTP pyrophosphatase (197 aa).

7–12 lines the substrate pocket; sequence TGNEQK. 2 residues coordinate Mg(2+): Glu-44 and Asp-73. Asp-73 acts as the Proton acceptor in catalysis. Substrate-binding positions include Thr-74, 156 to 159, Lys-179, and 184 to 185; these read FGYD and HR.

The protein belongs to the HAM1 NTPase family. Homodimer. Requires Mg(2+) as cofactor.

It carries out the reaction XTP + H2O = XMP + diphosphate + H(+). The catalysed reaction is dITP + H2O = dIMP + diphosphate + H(+). The enzyme catalyses ITP + H2O = IMP + diphosphate + H(+). In terms of biological role, pyrophosphatase that catalyzes the hydrolysis of nucleoside triphosphates to their monophosphate derivatives, with a high preference for the non-canonical purine nucleotides XTP (xanthosine triphosphate), dITP (deoxyinosine triphosphate) and ITP. Seems to function as a house-cleaning enzyme that removes non-canonical purine nucleotides from the nucleotide pool, thus preventing their incorporation into DNA/RNA and avoiding chromosomal lesions. In Elusimicrobium minutum (strain Pei191), this protein is dITP/XTP pyrophosphatase.